Reading from the N-terminus, the 107-residue chain is Essential MCU regulator, mitochondrial (107 aa).

The transit peptide at 1-52 (MASGAARWLVLAPVRSGALRSGPSLRKDGDVSAAWSGSGRSLVPSRSVIVTR) directs the protein to the mitochondrion. Residues 1 to 52 (MASGAARWLVLAPVRSGALRSGPSLRKDGDVSAAWSGSGRSLVPSRSVIVTR) are interaction with MAIP1. Over 54–65 (GAILPKPVKMSF) the chain is Mitochondrial matrix. Residues 66-85 (GLLRVFSIVIPFLYVGTLIS) traverse the membrane as a helical segment. The GXXXX[G/A/S] motif lies at 81 to 85 (GTLIS). Topologically, residues 86–107 (KNFAALLEEHDIFVPEDDDDDD) are mitochondrial intermembrane.

Belongs to the SMDT1/EMRE family. As to quaternary structure, component of the uniplex complex, composed of MCU, EMRE/SMDT1, MICU1 and MICU2 (or MICU3) in a 4:4:1:1 stoichiometry. The number of EMRE/SMDT1 molecules is hovewer variable, ranging from 1 to 4 copies per uniplex complex, leading to uniplex complexes with distinct gatekeeping profiles. Interacts (via its C-terminal poly-Asp tail) with MCUR1; the interaction is direct. Unprocessed form interacts (via transit peptide) with MAIP1. In terms of processing, undergoes proteolytic degradation in neurons: degraded by AFG3L2 and SPG7 before SMDT1/EMRE assembly with the uniporter complex, limiting the availability of SMDT1/EMRE for MCU assembly and promoting efficient assembly of gatekeeper subunits with MCU.

Its subcellular location is the mitochondrion inner membrane. In terms of biological role, essential regulatory subunit of the mitochondrial calcium uniporter complex (uniplex), a complex that mediates calcium uptake into mitochondria. Required to bridge the calcium-sensing proteins MICU1 with the calcium-conducting subunit MCU. Acts by mediating activation of MCU and retention of MICU1 to the MCU pore, in order to ensure tight regulation of the uniplex complex and appropriate responses to intracellular calcium signaling. In Homo sapiens (Human), this protein is Essential MCU regulator, mitochondrial.